Reading from the N-terminus, the 176-residue chain is Glutamyl-tRNA(Gln) amidotransferase subunit F, mitochondrial (176 aa).

The protein belongs to the GatF family. Subunit of the heterotrimeric GatFAB amidotransferase (AdT) complex, composed of A, B and F subunits.

It localises to the mitochondrion inner membrane. It carries out the reaction L-glutamyl-tRNA(Gln) + L-glutamine + ATP + H2O = L-glutaminyl-tRNA(Gln) + L-glutamate + ADP + phosphate + H(+). Its function is as follows. Allows the formation of correctly charged Gln-tRNA(Gln) through the transamidation of misacylated Glu-tRNA(Gln) in the mitochondria. The reaction takes place in the presence of glutamine and ATP through an activated gamma-phospho-Glu-tRNA(Gln). Required for proper protein synthesis within the mitochondrion. This chain is Glutamyl-tRNA(Gln) amidotransferase subunit F, mitochondrial, found in Yarrowia lipolytica (strain CLIB 122 / E 150) (Yeast).